The chain runs to 61 residues: Large ribosomal subunit protein bL32 (61 aa).

A compositionally biased stretch (basic residues) spans Met1–Arg16. Residues Met1–Gly61 form a disordered region. Residues Val28–Leu44 show a composition bias toward basic and acidic residues.

This sequence belongs to the bacterial ribosomal protein bL32 family.

This chain is Large ribosomal subunit protein bL32, found in Bartonella bacilliformis (strain ATCC 35685 / KC583 / Herrer 020/F12,63).